Reading from the N-terminus, the 842-residue chain is MSDFWDRNKGSIMSGLATAGKQGYKGTKFVAKTGYKAGKQHYNSSKNKREGNSNNSSSSDLTISSPPPLTADVSNFPPPPVKPGQNQYHGSSRGGSGNVPPAATSRTSSTLPSSYSSEQNPIIPQIGNPQAVPYQVPAPVPQYTTADSQAPHIASRAATIVPGTQLPISSHPNNTAPATYNTRPVPLPHRAPDNNAAAGLVADPQLLSNTSLPRATRQLLTIDTASIATQNPNISQEAFAVPPANTMASPFPQTTHASYLAASQSPVQPESIASNKVSEPTPAVPAVPTRTYVRAPAALPVQPLPQEERQAMPQAMPQVMPQAMPQVMPQAMPQVMPQAMAQTSQPFPEENGVSDVQELKSPTSATTVKPYSWKDSEELKESLRIKIQNVDISSLPTPPVHRNRSESPSSETSSLRSKIKSRSQSPSGLKSPTQSTAVNLKTTETGKAMSTSRQTPQQTGRSSREGEGANNGIAGRYDSSVQVNFPPPPKPSRSETQTPANRDMRSSSSPPVKPTTAPRAPPRLPSRSVPSQPPVTSSVPKLSSTANGKADRENIKPKSAVSGAYNYDIKVDFQPPPKPFRKDKESSQQAPRSVPSFEKPSKYGPPPASNAETAQGRSIRAPPQIPSRAASLDPPPAYDSSHSHAPSAPPASNVELQSLSASSIQAGAEKTVKVAGSTIQIPKTKKAPPIKKALPGSLQALDTHKSNPEASAHLTEKGKKRPPKPAKKQSLMEQPNKTASNGGNSRGNFDQELEARLKSRSFHEKPAAVPSLVEHSNSFISSGKIKAAAPPVKPKIPIRLASNEALQPNEQAEVKDDSDGDNPFRRYLKNAVPSENDRLHKN.

Disordered stretches follow at residues 1–25, 39–134, 338–368, 393–769, and 799–842; these read MSDFWDRNKGSIMSGLATAGKQGYK, KQHY…AVPY, QAMAQTSQPFPEENGVSDVQELKSPTSATTV, SSLP…PAAV, and RLAS…LHKN. Composition is skewed to low complexity over residues 52–64 and 104–117; these read NSNNSSSSDLTIS and TSRTSSTLPSSYSS. Low complexity predominate over residues 406 to 416; that stretch reads ESPSSETSSLR. The span at 422 to 461 shows a compositional bias: polar residues; the sequence is RSQSPSGLKSPTQSTAVNLKTTETGKAMSTSRQTPQQTGR. Composition is skewed to low complexity over residues 525–540 and 638–652; these read PSRSVPSQPPVTSSVP and YDSSHSHAPSAPPAS. Positions 654 to 665 are enriched in polar residues; that stretch reads VELQSLSASSIQ. Positions 718-727 are enriched in basic residues; sequence GKKRPPKPAK. Residues 731 to 748 are compositionally biased toward polar residues; it reads LMEQPNKTASNGGNSRGN. Residues 753 to 766 show a composition bias toward basic and acidic residues; the sequence is LEARLKSRSFHEKP.

It belongs to the AIM3 family.

The protein localises to the membrane raft. The protein is Altered inheritance of mitochondria protein 3 (AIM3) of Lachancea thermotolerans (strain ATCC 56472 / CBS 6340 / NRRL Y-8284) (Yeast).